Consider the following 499-residue polypeptide: UDP-N-acetylmuramoylalanine--D-glutamate ligase (499 aa).

129–135 (GTNGKTT) serves as a coordination point for ATP.

This sequence belongs to the MurCDEF family.

The protein resides in the cytoplasm. It catalyses the reaction UDP-N-acetyl-alpha-D-muramoyl-L-alanine + D-glutamate + ATP = UDP-N-acetyl-alpha-D-muramoyl-L-alanyl-D-glutamate + ADP + phosphate + H(+). It participates in cell wall biogenesis; peptidoglycan biosynthesis. In terms of biological role, cell wall formation. Catalyzes the addition of glutamate to the nucleotide precursor UDP-N-acetylmuramoyl-L-alanine (UMA). The protein is UDP-N-acetylmuramoylalanine--D-glutamate ligase of Ralstonia nicotianae (strain ATCC BAA-1114 / GMI1000) (Ralstonia solanacearum).